The sequence spans 606 residues: Phosphoenolpyruvate carboxykinase [GTP] (606 aa).

Substrate contacts are provided by residues Arg-79 and 218 to 220; that span reads YGG. Residues Lys-227 and His-247 each coordinate Mn(2+). A substrate-binding site is contributed by Ser-269. 270–275 lines the GTP pocket; the sequence is ACGKTN. Cys-271 is an active-site residue. Asp-294 provides a ligand contact to Mn(2+). 384–386 serves as a coordination point for substrate; sequence NSR. GTP contacts are provided by residues Arg-386, Arg-417, and 512–515; that span reads FGEN.

The protein belongs to the phosphoenolpyruvate carboxykinase [GTP] family. As to quaternary structure, monomer. Mn(2+) serves as cofactor.

It is found in the cytoplasm. The catalysed reaction is oxaloacetate + GTP = phosphoenolpyruvate + GDP + CO2. Its pathway is carbohydrate biosynthesis; gluconeogenesis. Functionally, catalyzes the conversion of oxaloacetate (OAA) to phosphoenolpyruvate (PEP), the rate-limiting step in the metabolic pathway that produces glucose from lactate and other precursors derived from the citric acid cycle. The sequence is that of Phosphoenolpyruvate carboxykinase [GTP] from Corynebacterium jeikeium (strain K411).